Here is a 293-residue protein sequence, read N- to C-terminus: Protease HtpX (293 aa).

The next 2 helical transmembrane spans lie at Ile4–Leu24 and Val32–Leu52. His139 contributes to the Zn(2+) binding site. Glu140 is an active-site residue. His143 lines the Zn(2+) pocket. The next 2 membrane-spanning stretches (helical) occupy residues Ile158–Met178 and Met193–Ile213. Residue Glu222 participates in Zn(2+) binding.

The protein belongs to the peptidase M48B family. Zn(2+) serves as cofactor.

It localises to the cell inner membrane. The protein is Protease HtpX of Erwinia tasmaniensis (strain DSM 17950 / CFBP 7177 / CIP 109463 / NCPPB 4357 / Et1/99).